A 118-amino-acid chain; its full sequence is Large ribosomal subunit protein eL18 (118 aa).

This sequence belongs to the eukaryotic ribosomal protein eL18 family.

In Nanoarchaeum equitans (strain Kin4-M), this protein is Large ribosomal subunit protein eL18.